A 1133-amino-acid chain; its full sequence is Eukaryotic translation initiation factor 3 subunit A (1133 aa).

In terms of domain architecture, PCI spans 317–498 (IQRMTSHVLI…HCVHFGTDLS (182 aa)). Coiled coils occupy residues 573-700 (KKIE…YFER) and 784-886 (EEER…EADS). A compositionally biased stretch (basic and acidic residues) spans 810-893 (KEEERRRAEE…ADSWRDRRGG (84 aa)). Residues 810 to 1133 (KEEERRRAEE…DGWTDVKHHR (324 aa)) are disordered. A compositionally biased stretch (low complexity) spans 895-909 (APAAAAQPNPAAQEA). Basic and acidic residues-rich tracts occupy residues 920–944 (GAREPRGEDAPKKDGVYQPRFRDVR), 954–1081 (VERR…DSAW), and 1097–1117 (TRQDQAKPKDDRREERPKEAR).

This sequence belongs to the eIF-3 subunit A family. Component of the eukaryotic translation initiation factor 3 (eIF-3) complex.

It is found in the cytoplasm. RNA-binding component of the eukaryotic translation initiation factor 3 (eIF-3) complex, which is involved in protein synthesis of a specialized repertoire of mRNAs and, together with other initiation factors, stimulates binding of mRNA and methionyl-tRNAi to the 40S ribosome. The eIF-3 complex specifically targets and initiates translation of a subset of mRNAs involved in cell proliferation. This Aedes aegypti (Yellowfever mosquito) protein is Eukaryotic translation initiation factor 3 subunit A.